A 254-amino-acid polypeptide reads, in one-letter code: Tabinhibitin 6 (254 aa).

The signal sequence occupies residues M1–A22. The Cell attachment site motif lies at R31–D33. In terms of domain architecture, SCP spans L66–F210.

Belongs to the CRISP family. Expressed in salivary glands.

The protein resides in the secreted. Its function is as follows. Inhibits platelet aggregation induced by all agonists tested (ADP, arachidonic acid, the thromboxane A2 analog U46619, thrombin, and snake venom snaclecs (TMVA that activates platelet through GPIB, and stejnulxin that specifically acts through GPVI (GP6))). May act by competing with fibrinogen for binding to glycoprotein IIb/IIIa (ITGA2B/ITGB3). This chain is Tabinhibitin 6, found in Tabanus yao (Horsefly).